The following is a 348-amino-acid chain: Fructose-1,6-bisphosphatase class 1 (348 aa).

E92, D111, L113, and D114 together coordinate Mg(2+). Substrate contacts are provided by residues D114–S117 and N204. E276 is a binding site for Mg(2+).

The protein belongs to the FBPase class 1 family. As to quaternary structure, homotetramer. Mg(2+) is required as a cofactor.

Its subcellular location is the cytoplasm. The enzyme catalyses beta-D-fructose 1,6-bisphosphate + H2O = beta-D-fructose 6-phosphate + phosphate. It functions in the pathway carbohydrate biosynthesis; gluconeogenesis. This chain is Fructose-1,6-bisphosphatase class 1, found in Methylorubrum populi (strain ATCC BAA-705 / NCIMB 13946 / BJ001) (Methylobacterium populi).